We begin with the raw amino-acid sequence, 206 residues long: Ras-related protein ralB-A (206 aa).

Position 21-28 (21-28 (GSGGVGKS)) interacts with GTP. Positions 43-51 (YEPTKADSY) match the Effector region motif. GTP-binding positions include 68–72 (DTAGQ) and 128–131 (NKSD). Residues 180–189 (KMSENKDKNG) are compositionally biased toward basic and acidic residues. Positions 180–206 (KMSENKDKNGKKSGKSKKGFKQRCCLL) are disordered. Over residues 190 to 200 (KKSGKSKKGFK) the composition is skewed to basic residues. Cys-203 is subject to Cysteine methyl ester. Cys-203 is lipidated: S-geranylgeranyl cysteine. The propeptide at 204 to 206 (CLL) is removed in mature form.

This sequence belongs to the small GTPase superfamily. Ras family. Interacts with ralbp1 and rap1gds1. In terms of tissue distribution, weakly expressed in adult tissues and highest levels were found in heart, brain and testes.

It is found in the cell membrane. It localises to the midbody. The enzyme catalyses GTP + H2O = GDP + phosphate + H(+). Functionally, multifunctional GTPase involved in a variety of cellular processes including gene expression, cell migration, cell proliferation, oncogenic transformation and membrane trafficking. Accomplishes its multiple functions by interacting with distinct downstream effectors. Acts as a GTP sensor for GTP-dependent exocytosis of dense core vesicles. Required both to stabilize the assembly of the exocyst complex and to localize functional exocyst complexes to the leading edge of migrating cells. Required for suppression of apoptosis. In late stages of cytokinesis, upon completion of the bridge formation between dividing cells, mediates exocyst recruitment to the midbody to drive abscission. Regulates the actin cytoskeleton to play a role in gastrulation or neurulation. During the cleavage stages, the GTP-bound form induces a cortical reaction that affects the localization of pigment granules. Activated by the FGF pathway via ras and ral-GDS, but independently of raf. Directs ralbp1 to the plasma membrane. Involved in ligand-dependent receptor mediated endocytosis of the EGF and insulin receptors. The protein is Ras-related protein ralB-A (ralb-a) of Xenopus laevis (African clawed frog).